We begin with the raw amino-acid sequence, 536 residues long: Chorismate synthase (536 aa).

The active site involves His17. The tract at residues 37 to 59 (EDVQPQLNRRRPGQGPLSTQRRE) is disordered. The active site involves His104. Residues 344–377 (ERDGCSAATLSRERASDGRTTSRHEEEVERGRER) are disordered. Residues 354–377 (SRERASDGRTTSRHEEEVERGRER) are compositionally biased toward basic and acidic residues. Asp489 is a catalytic residue.

The protein belongs to the chorismate synthase family. FMNH2 is required as a cofactor.

It carries out the reaction 5-O-(1-carboxyvinyl)-3-phosphoshikimate = chorismate + phosphate. The enzyme catalyses FMNH2 + NADP(+) = FMN + NADPH + 2 H(+). It functions in the pathway metabolic intermediate biosynthesis; chorismate biosynthesis; chorismate from D-erythrose 4-phosphate and phosphoenolpyruvate: step 7/7. Functionally, bifunctional chorismate synthase and flavin reductase. Catalyzes the conversion of 5-enolpyruvylshikimate 3-phosphate (EPSP) to form chorismate. Acts also as a flavin reductase (FR) able to generate reduced flavin mononucleotide in the presence of NADPH. The polypeptide is Chorismate synthase (AROC) (Toxoplasma gondii).